We begin with the raw amino-acid sequence, 190 residues long: Protein GrpE (190 aa).

The span at 1–11 (MSNQDEPQNSP) shows a compositional bias: polar residues. Residues 1–36 (MSNQDEPQNSPEEFAEDQQADVALEEASSDSSETAA) are disordered. Acidic residues predominate over residues 13–28 (EFAEDQQADVALEEAS).

This sequence belongs to the GrpE family. Homodimer.

The protein localises to the cytoplasm. Participates actively in the response to hyperosmotic and heat shock by preventing the aggregation of stress-denatured proteins, in association with DnaK and GrpE. It is the nucleotide exchange factor for DnaK and may function as a thermosensor. Unfolded proteins bind initially to DnaJ; upon interaction with the DnaJ-bound protein, DnaK hydrolyzes its bound ATP, resulting in the formation of a stable complex. GrpE releases ADP from DnaK; ATP binding to DnaK triggers the release of the substrate protein, thus completing the reaction cycle. Several rounds of ATP-dependent interactions between DnaJ, DnaK and GrpE are required for fully efficient folding. This chain is Protein GrpE, found in Teredinibacter turnerae (strain ATCC 39867 / T7901).